Consider the following 427-residue polypeptide: Tol-Pal system protein TolB (427 aa).

A signal peptide spans 1 to 23; it reads MKLLKRLVSVFAIVLAVGSNAFA.

It belongs to the TolB family. The Tol-Pal system is composed of five core proteins: the inner membrane proteins TolA, TolQ and TolR, the periplasmic protein TolB and the outer membrane protein Pal. They form a network linking the inner and outer membranes and the peptidoglycan layer.

It localises to the periplasm. In terms of biological role, part of the Tol-Pal system, which plays a role in outer membrane invagination during cell division and is important for maintaining outer membrane integrity. This Haemophilus influenzae (strain PittEE) protein is Tol-Pal system protein TolB.